The chain runs to 177 residues: Flavodoxin (177 aa).

A Flavodoxin-like domain is found at Ile-4–Lys-173.

Belongs to the flavodoxin family. FMN serves as cofactor.

Its function is as follows. Low-potential electron donor to a number of redox enzymes. NifF is the electron donor to nitrogenase. This Enterobacter agglomerans (Erwinia herbicola) protein is Flavodoxin (nifF).